A 302-amino-acid chain; its full sequence is Sulfate adenylyltransferase subunit 2 (302 aa).

The disordered stretch occupies residues 280–302 (RQGRLIDSDQSASMEQKKRQGYF).

Belongs to the PAPS reductase family. CysD subfamily. In terms of assembly, heterodimer composed of CysD, the smaller subunit, and CysN.

The catalysed reaction is sulfate + ATP + H(+) = adenosine 5'-phosphosulfate + diphosphate. It participates in sulfur metabolism; hydrogen sulfide biosynthesis; sulfite from sulfate: step 1/3. With CysN forms the ATP sulfurylase (ATPS) that catalyzes the adenylation of sulfate producing adenosine 5'-phosphosulfate (APS) and diphosphate, the first enzymatic step in sulfur assimilation pathway. APS synthesis involves the formation of a high-energy phosphoric-sulfuric acid anhydride bond driven by GTP hydrolysis by CysN coupled to ATP hydrolysis by CysD. The polypeptide is Sulfate adenylyltransferase subunit 2 (Shewanella baltica (strain OS223)).